The chain runs to 409 residues: Argininosuccinate synthase (409 aa).

Residues Ala8–Ser16 and Ala34 each bind ATP. Residue Tyr85 participates in L-citrulline binding. Residue Gly115 coordinates ATP. 3 residues coordinate L-aspartate: Thr117, Asn121, and Asp122. Residue Asn121 participates in L-citrulline binding. L-citrulline is bound by residues Arg125, Ser178, Ser187, Glu268, and Tyr280.

It belongs to the argininosuccinate synthase family. Type 1 subfamily. In terms of assembly, homotetramer.

The protein localises to the cytoplasm. The catalysed reaction is L-citrulline + L-aspartate + ATP = 2-(N(omega)-L-arginino)succinate + AMP + diphosphate + H(+). Its pathway is amino-acid biosynthesis; L-arginine biosynthesis; L-arginine from L-ornithine and carbamoyl phosphate: step 2/3. The sequence is that of Argininosuccinate synthase from Thermotoga sp. (strain RQ2).